A 445-amino-acid polypeptide reads, in one-letter code: Glutamyl-tRNA(Gln) amidotransferase subunit D (445 aa).

The Asparaginase/glutaminase domain occupies 93 to 425; it reads SEIKIISTGG…EKIRSLMISN (333 aa). Active-site residues include T103, T179, D180, and K258.

Belongs to the asparaginase 1 family. GatD subfamily. In terms of assembly, heterodimer of GatD and GatE.

It catalyses the reaction L-glutamyl-tRNA(Gln) + L-glutamine + ATP + H2O = L-glutaminyl-tRNA(Gln) + L-glutamate + ADP + phosphate + H(+). In terms of biological role, allows the formation of correctly charged Gln-tRNA(Gln) through the transamidation of misacylated Glu-tRNA(Gln) in organisms which lack glutaminyl-tRNA synthetase. The reaction takes place in the presence of glutamine and ATP through an activated gamma-phospho-Glu-tRNA(Gln). The GatDE system is specific for glutamate and does not act on aspartate. In Saccharolobus islandicus (strain L.S.2.15 / Lassen #1) (Sulfolobus islandicus), this protein is Glutamyl-tRNA(Gln) amidotransferase subunit D.